The sequence spans 338 residues: Phenylalanine--tRNA ligase alpha subunit (338 aa).

E253 is a binding site for Mg(2+).

This sequence belongs to the class-II aminoacyl-tRNA synthetase family. Phe-tRNA synthetase alpha subunit type 1 subfamily. As to quaternary structure, tetramer of two alpha and two beta subunits. Mg(2+) serves as cofactor.

Its subcellular location is the cytoplasm. The catalysed reaction is tRNA(Phe) + L-phenylalanine + ATP = L-phenylalanyl-tRNA(Phe) + AMP + diphosphate + H(+). This is Phenylalanine--tRNA ligase alpha subunit from Geobacter sp. (strain M21).